We begin with the raw amino-acid sequence, 397 residues long: Elongation factor Tu (397 aa).

In terms of domain architecture, tr-type G spans 10 to 207; that stretch reads KPHVNVGTVG…AIDAYVPDPV (198 aa). The segment at 19-26 is G1; it reads GHIDHGKT. 19–26 contributes to the GTP binding site; sequence GHIDHGKT. Thr26 serves as a coordination point for Mg(2+). Residues 60–64 form a G2 region; sequence GITIA. The interval 81–84 is G3; sequence DCPG. Residues 81 to 85 and 136 to 139 each bind GTP; these read DCPGH and NKVD. The interval 136 to 139 is G4; that stretch reads NKVD. Positions 174–176 are G5; the sequence is SAL.

The protein belongs to the TRAFAC class translation factor GTPase superfamily. Classic translation factor GTPase family. EF-Tu/EF-1A subfamily. As to quaternary structure, monomer.

Its subcellular location is the cytoplasm. It catalyses the reaction GTP + H2O = GDP + phosphate + H(+). Its function is as follows. GTP hydrolase that promotes the GTP-dependent binding of aminoacyl-tRNA to the A-site of ribosomes during protein biosynthesis. The polypeptide is Elongation factor Tu (Syntrophobacter fumaroxidans (strain DSM 10017 / MPOB)).